A 101-amino-acid chain; its full sequence is uncharacterized protein (101 aa).

The first 24 residues, 1–24 (MILMFRMNKGMSFITLLFSLALFS), serve as a signal peptide directing secretion.

This is an uncharacterized protein from Haemophilus influenzae (strain ATCC 51907 / DSM 11121 / KW20 / Rd).